Here is a 75-residue protein sequence, read N- to C-terminus: Large ribosomal subunit protein bL28 (75 aa).

This sequence belongs to the bacterial ribosomal protein bL28 family.

In Buchnera aphidicola subsp. Acyrthosiphon pisum (strain APS) (Acyrthosiphon pisum symbiotic bacterium), this protein is Large ribosomal subunit protein bL28.